A 403-amino-acid polypeptide reads, in one-letter code: Coenzyme A biosynthesis bifunctional protein CoaBC (403 aa).

The interval 1-197 (MISEIMHPTK…GNNLKKEGNR (197 aa)) is phosphopantothenoylcysteine decarboxylase. A phosphopantothenate--cysteine ligase region spans residues 198–403 (VLILNGGTVE…VEKVKKLVKS (206 aa)). CTP is bound by residues Asp285, Lys294, and Phe327.

In the N-terminal section; belongs to the HFCD (homo-oligomeric flavin containing Cys decarboxylase) superfamily. It in the C-terminal section; belongs to the PPC synthetase family. As to quaternary structure, homododecamer. The CoaC domain is responsible for dodecamer formation. Requires Mg(2+) as cofactor. The cofactor is FMN.

It catalyses the reaction N-[(R)-4-phosphopantothenoyl]-L-cysteine + H(+) = (R)-4'-phosphopantetheine + CO2. The catalysed reaction is (R)-4'-phosphopantothenate + L-cysteine + CTP = N-[(R)-4-phosphopantothenoyl]-L-cysteine + CMP + diphosphate + H(+). The protein operates within cofactor biosynthesis; coenzyme A biosynthesis. Catalyzes two sequential steps in the biosynthesis of coenzyme A. In the first step cysteine is conjugated to 4'-phosphopantothenate to form 4-phosphopantothenoylcysteine. In the second step the latter compound is decarboxylated to form 4'-phosphopantotheine. The polypeptide is Coenzyme A biosynthesis bifunctional protein CoaBC (Methanocaldococcus jannaschii (strain ATCC 43067 / DSM 2661 / JAL-1 / JCM 10045 / NBRC 100440) (Methanococcus jannaschii)).